The following is a 224-amino-acid chain: Germin-like protein 8-4 (224 aa).

The signal sequence occupies residues 1 to 23 (MASSSSLYLLAALLALASWQAIA). Cys-33 and Cys-48 are joined by a disulfide. The region spanning 70–213 (STMNKVGSNV…AFQVEKKVID (144 aa)) is the Cupin type-1 domain. A glycan (N-linked (GlcNAc...) asparagine) is linked at Asn-78. Mn(2+) is bound by residues His-111, His-113, Glu-118, and His-158.

This sequence belongs to the germin family. In terms of assembly, oligomer (believed to be a pentamer but probably hexamer).

It localises to the secreted. It is found in the extracellular space. The protein localises to the apoplast. Functionally, plays a role in broad-spectrum disease resistance. Probably has no oxalate oxidase activity even if the active site is conserved. The chain is Germin-like protein 8-4 (GER1) from Oryza sativa subsp. japonica (Rice).